Reading from the N-terminus, the 534-residue chain is Cyclin-L1 (534 aa).

Cyclin-like stretches follow at residues 94-196 (ELIQ…RVLK) and 209-293 (KIIV…KILQ). Residues 327–534 (LPEGAPVLDN…DHPGHSRHRR (208 aa)) form a disordered region. The span at 389-399 (KGRESRSRSGS) shows a compositional bias: basic and acidic residues. Composition is skewed to low complexity over residues 400–412 (RDQS…SRSA) and 437–453 (RSGS…TYKS). An RS region spans residues 400–436 (RDQSYSRSPSRSASPKHRKSESYSTSSGSKSHSRSRS). Basic residues predominate over residues 468 to 485 (SAHKARKSRSRSSSRSRS). The segment covering 486-495 (RSRERSDHSG) has biased composition (basic and acidic residues). The span at 496-511 (KYKKKSHYYRNHRHER) shows a compositional bias: basic residues. Positions 512–528 (SRSYERASHRYDRDHPG) are enriched in basic and acidic residues.

This sequence belongs to the cyclin family. Cyclin L subfamily.

It localises to the nucleus speckle. The protein localises to the nucleus. It is found in the nucleoplasm. In terms of biological role, involved in pre-mRNA splicing. The chain is Cyclin-L1 (CCNL1) from Gallus gallus (Chicken).